We begin with the raw amino-acid sequence, 749 residues long: 5-methyltetrahydropteroyltriglutamate--homocysteine methyltransferase (749 aa).

Residues 15–18 (RELK) and K114 each bind 5-methyltetrahydropteroyltri-L-glutamate. L-homocysteine is bound by residues 425 to 427 (IGS) and E478. L-methionine-binding positions include 425 to 427 (IGS) and E478. W555 serves as a coordination point for 5-methyltetrahydropteroyltri-L-glutamate. D593 is a binding site for L-homocysteine. D593 is an L-methionine binding site. E599 contributes to the 5-methyltetrahydropteroyltri-L-glutamate binding site. Residues H636, C638, and E660 each contribute to the Zn(2+) site. The active-site Proton donor is the H689. Residue C721 coordinates Zn(2+).

It belongs to the vitamin-B12 independent methionine synthase family. Zn(2+) is required as a cofactor.

The enzyme catalyses 5-methyltetrahydropteroyltri-L-glutamate + L-homocysteine = tetrahydropteroyltri-L-glutamate + L-methionine. The protein operates within amino-acid biosynthesis; L-methionine biosynthesis via de novo pathway; L-methionine from L-homocysteine (MetE route): step 1/1. Its function is as follows. Catalyzes the transfer of a methyl group from 5-methyltetrahydrofolate to homocysteine resulting in methionine formation. The chain is 5-methyltetrahydropteroyltriglutamate--homocysteine methyltransferase from Streptococcus pneumoniae serotype 19F (strain G54).